The following is a 374-amino-acid chain: Putative cullin-like protein 2 (374 aa).

It belongs to the cullin family.

The protein is Putative cullin-like protein 2 of Arabidopsis thaliana (Mouse-ear cress).